A 399-amino-acid polypeptide reads, in one-letter code: (R)-2-hydroxy-4-methylpentanoate CoA-transferase (399 aa).

The Nucleophile role is filled by D171.

Belongs to the CoA-transferase III family. As to quaternary structure, homodimer.

The enzyme catalyses 4-methylpentanoyl-CoA + (2R)-hydroxy-4-methylpentanoate = (R)-2-hydroxy-4-methylpentanoyl-CoA + 4-methylpentanoate. Its pathway is amino-acid degradation; L-leucine degradation. Functionally, involved in the reductive branch of L-leucine fermentation. Catalyzes the transfer of the CoA moiety from 4-methylpentanoyl-CoA (isocaproyl-CoA) to (R)-2-hydroxy-4-methylpentanoate ((R)-2-hydroxyisocaproate), leading to the formation of (R)-2-hydroxy-4-methylpentanoyl-CoA. Other CoA thioesters, such as acetyl-CoA or butyryl-CoA, are not accepted as substrates. The protein is (R)-2-hydroxy-4-methylpentanoate CoA-transferase of Clostridioides difficile (Peptoclostridium difficile).